Reading from the N-terminus, the 146-residue chain is Hemoglobin subunit beta (146 aa).

Valine 1 carries the N-acetylvaline modification. Positions 2–146 (HLSGEEKGAV…VATALAHKYH (145 aa)) constitute a Globin domain. Residue threonine 12 is modified to Phosphothreonine. Serine 44 carries the post-translational modification Phosphoserine. Lysine 59 is modified (N6-acetyllysine). Position 63 (histidine 63) interacts with heme b. N6-acetyllysine is present on lysine 82. A heme b-binding site is contributed by histidine 92. At cysteine 93 the chain carries S-nitrosocysteine. Lysine 144 bears the N6-acetyllysine mark.

It belongs to the globin family. In terms of assembly, heterotetramer of two alpha chains and two beta chains. As to expression, red blood cells.

Functionally, involved in oxygen transport from the lung to the various peripheral tissues. The sequence is that of Hemoglobin subunit beta (HBB) from Tadarida brasiliensis (Brazilian free-tailed bat).